A 619-amino-acid polypeptide reads, in one-letter code: Adagio protein 3 (619 aa).

The region spanning 44–123 (VGMFYYPMTP…SEIRRCLEEG (80 aa)) is the PAS domain. Cys-91 is subject to S-4a-FMN cysteine. Residues 127-168 (QGELLNFRKDGTPLVNRLRLAPIRDDDGTITHVIGIQVFSET) enclose the PAC domain. The F-box domain occupies 211–257 (ILQLSDEVLAHNILSRLTPRDVASIGSACRRLRQLTKNESVRKMVCQ). 5 Kelch repeats span residues 304 to 354 (SRCN…TSSP), 357 to 404 (RWGH…AGGT), 409 to 457 (RSWH…PTSW), 462 to 513 (RLGH…ECSA), and 523 to 571 (RLDH…NVPG).

Belongs to the ADAGIO family. Interacts with ADO1 (via Kelch repeats), ADO2 (via Kelch repeats), SKP1A/ASK1, SKP1B/ASK2, ASK3, SKP1K/ASK11, ASK12, ASK13 and SKP1N/ASK14. Interacts (via Kelch repeats) with CDF1, CDF2 and CDF3. Interacts (via N-terminus) with CO and GI (via N-terminus) in a blue-light-dependent manner. Post-translationally, FMN binds covalently to cysteine after exposure to blue light and is reversed in the dark. Highly expressed in stomata and leaves and to a lower extent in seeds, roots, rosettes, stems and siliques. Also present in sepals and anther filaments.

The protein resides in the nucleus. Its subcellular location is the cytoplasm. Its pathway is protein modification; protein ubiquitination. Its function is as follows. Component of an E3 ubiquitin ligase complex that plays a central role in blue light-dependent circadian cycles. Acts as a blue light photoreceptor, due to the presence of FMN, that mediates light-regulated protein degradation of critical clock components by targeting them to the proteasome complex. The SCF(ADO3) E3 ubiquitin ligase complex is involved in the regulation of circadian clock-dependent processes including transition to flowering time, hypocotyl elongation, cotyledons and leaf movement rhythms. Forms a complex with 'GIGANTEA' (GI) to regulate 'CONSTANS' (CO) expression. Promotes CO expression during the light period of long days by decreasing the stability of CDF1 and CDF2 and by interacting directly with the CO protein and stabilizing it. ADO3 function is mainly GI dependent. Does not act as a regulator of CDF1 transcription. The interactions of ADO1/ZTL and ADO2 with ADO3 prevent its interaction with CDF1. This chain is Adagio protein 3 (ADO3), found in Arabidopsis thaliana (Mouse-ear cress).